A 277-amino-acid chain; its full sequence is Tryptophan synthase alpha chain (277 aa).

Residues Glu59 and Asp70 each act as proton acceptor in the active site.

Belongs to the TrpA family. Tetramer of two alpha and two beta chains.

The catalysed reaction is (1S,2R)-1-C-(indol-3-yl)glycerol 3-phosphate + L-serine = D-glyceraldehyde 3-phosphate + L-tryptophan + H2O. It functions in the pathway amino-acid biosynthesis; L-tryptophan biosynthesis; L-tryptophan from chorismate: step 5/5. In terms of biological role, the alpha subunit is responsible for the aldol cleavage of indoleglycerol phosphate to indole and glyceraldehyde 3-phosphate. The chain is Tryptophan synthase alpha chain from Streptomyces avermitilis (strain ATCC 31267 / DSM 46492 / JCM 5070 / NBRC 14893 / NCIMB 12804 / NRRL 8165 / MA-4680).